A 198-amino-acid polypeptide reads, in one-letter code: Putative nitroreductase MJ1384 (198 aa).

The protein belongs to the nitroreductase family. It depends on FMN as a cofactor.

The polypeptide is Putative nitroreductase MJ1384 (Methanocaldococcus jannaschii (strain ATCC 43067 / DSM 2661 / JAL-1 / JCM 10045 / NBRC 100440) (Methanococcus jannaschii)).